The following is a 302-amino-acid chain: Sulfate adenylyltransferase subunit 2 (302 aa).

Belongs to the PAPS reductase family. CysD subfamily. In terms of assembly, heterodimer composed of CysD, the smaller subunit, and CysN.

It catalyses the reaction sulfate + ATP + H(+) = adenosine 5'-phosphosulfate + diphosphate. The protein operates within sulfur metabolism; hydrogen sulfide biosynthesis; sulfite from sulfate: step 1/3. In terms of biological role, with CysN forms the ATP sulfurylase (ATPS) that catalyzes the adenylation of sulfate producing adenosine 5'-phosphosulfate (APS) and diphosphate, the first enzymatic step in sulfur assimilation pathway. APS synthesis involves the formation of a high-energy phosphoric-sulfuric acid anhydride bond driven by GTP hydrolysis by CysN coupled to ATP hydrolysis by CysD. This chain is Sulfate adenylyltransferase subunit 2, found in Salmonella schwarzengrund (strain CVM19633).